We begin with the raw amino-acid sequence, 271 residues long: MQAACWYVLFLLQPTVYLVTCANLTNGGKSELLKSGSSKSTLKHIWTESSKDLSISRLLSQTFRGKENDTDLDLRYDTPEPYSEQDLWDWLRNSTDLQEPRPRAKRRPIVKTGKFKKMFGWGDFHSNIKTVKLNLLITGKIVDHGNGTFSVYFRHNSTGQGNVSVSLVPPTKIVEFDLAQQTVIDAKDSKSFNCRIEYEKVDKATKNTLCNYDPSKTCYQEQTQSHVSWLCSKPFKVICIYISFYSTDYKLVQKVCPDYNYHSDTPYFPSG.

An N-terminal signal peptide occupies residues 1–21; the sequence is MQAACWYVLFLLQPTVYLVTC. Positions 22–97 are II; it reads ANLTNGGKSE…WDWLRNSTDL (76 aa). Asn23, Asn68, Asn93, Asn146, Asn156, and Asn162 each carry an N-linked (GlcNAc...) asparagine glycan. Residues 98 to 176 are III; sequence QEPRPRAKRR…LVPPTKIVEF (79 aa). The tract at residues 177 to 185 is IV (linker domain); the sequence is DLAQQTVID. Positions 186–271 are v (Cys-rich); that stretch reads AKDSKSFNCR…HSDTPYFPSG (86 aa).

It belongs to the neurexophilin family.

The protein resides in the secreted. Functionally, may be signaling molecules that resemble neuropeptides and that act by binding to alpha-neurexins and possibly other receptors. This is Neurexophilin-1 (NXPH1) from Homo sapiens (Human).